Here is a 195-residue protein sequence, read N- to C-terminus: DnaJ homolog subfamily C member 5 (195 aa).

Residues 13-82 (GDSLYIVLGL…RNIYDKYGSL (70 aa)) form the J domain. The segment at 162–195 (DMEKEGDGAIVVQPTSATETTQLTSDSHPSYHTE) is disordered. Residues 174-189 (QPTSATETTQLTSDSH) show a composition bias toward polar residues.

Post-translationally, palmitoylated. Palmitoylation occurs probably in the cysteine-rich domain and regulates DNAJC5 stable membrane attachment.

Its subcellular location is the cytoplasm. It is found in the cytosol. The protein localises to the membrane. The protein resides in the cytoplasmic vesicle. It localises to the secretory vesicle. Its subcellular location is the chromaffin granule membrane. It is found in the melanosome. The protein localises to the cell membrane. Its function is as follows. May have an important role in presynaptic function. May be involved in calcium-dependent neurotransmitter release at nerve endings. The chain is DnaJ homolog subfamily C member 5 from Tetronarce californica (Pacific electric ray).